A 2620-amino-acid chain; its full sequence is Ankyrin repeat and KH domain-containing protein mask-1 (2620 aa).

12 ANK repeats span residues 254–283 (SKITPLMEAAASSSETIVRRLLELGADPNV), 288–318 (NCNTALIYAASTDGRDVVREILMTEGPKKPD), 361–390 (ERDSALTLSAQKGHIKIVTAIMDYYEKNPP), 402–431 (ERYSALMEAAMEGHIDVCKLMLSRGTPADL), 437–466 (IEPSPLIVASAGGYPEVVEVLLAAGAKIEE), 470–502 (KKNTPLMEACAGDQGDQAGVVKLLLSKHAEVDV), 507–536 (TGDTPLSLAARNGYIAIMKMLIEKGGDLTA), 538–566 (KTSPIVEAARNGHLECIQFILAHCKTIPQ), 568–597 (QLSRALVSAADFGSLLIVEEVIRAGADLNF), 600–629 (DERTALMKAAKGDHFEVVQLLLSKGASVNF), 634–663 (NDATALSLACSEGNMEIAEFLIRNGADPML), and 667–697 (DGVNCFMEVARHGSIDLMSLLVEFTKGNMPM). Disordered stretches follow at residues 699-726 (KDPPKLGITRCSSKNGKKRRKGMPSGQD), 994-1032 (HQEERFGPSKPIPSGPKKTSLTAPNPADTSDVTTKQPGA), and 1192-1229 (SLMAKSVQSQQQQGQLRRTHSEGDGAERAKSRSNAIDK). Residues 1012–1029 (TSLTAPNPADTSDVTTKQ) are compositionally biased toward polar residues. Residues 1192–1206 (SLMAKSVQSQQQQGQ) are compositionally biased toward low complexity. The span at 1210–1221 (THSEGDGAERAK) shows a compositional bias: basic and acidic residues. ANK repeat units lie at residues 1234–1263 (TLETPLTIACANGHKDIVELLLKEGANIEH), 1267–1296 (KGFSPLIIAATAGHSSVVEVLLKNHAAIEA), 1301–1330 (TKDTALSLACSGGRKDVVELLLAHGANKEH), 1334–1363 (SDYTPLSLASSGGYIEIVNMLLTAGSEINS), 1369–1398 (LGISPLMLASMNGHREATRVLLEKGSDINA), 1403–1432 (NRNTALTLASFQGRTEVVKLLLAYNANVEH), 1436–1465 (TGLTPLMECASGGYVDVGNLLIAAGADTNA), 1471–1500 (TKDTALTISAEKGHEKFVRMLLNGDAAVDV), 1504–1533 (KGCTALWLACNGGYLSTAQALLEKGADPDM), and 1537–1566 (RKISPMMAAFRKGHVEIVKYMVNSAKQFPN). Residues 1596–1648 (AKKAQAESAELAAQKLLELIDEEKVQKEVKKQKQKDKKIKKKEEKKIKKQEAE) adopt a coiled-coil conformation. 2 disordered regions span residues 1621–1720 (QKEV…AEEP) and 1759–1804 (KEGK…EIDT). Over residues 1636-1647 (KKEEKKIKKQEA) the composition is skewed to basic and acidic residues. Over residues 1648–1661 (EPEPEPEPEPEPVP) the composition is skewed to acidic residues. 2 stretches are compositionally biased toward low complexity: residues 1665–1681 (PVVISEPVPEPVPIVVE) and 1769–1791 (KSGYGAPSSAGSSQAKESSTTSS). The KH domain occupies 1807–1873 (ESSWKLTIPA…EMVRYAMNII (67 aa)). The span at 1899 to 1913 (ASSFSSEGTSKSAVD) shows a compositional bias: polar residues. 8 disordered regions span residues 1899–1962 (ASSF…GNVW), 1976–2010 (LMETKRISQSPKQAPQIPSTQQQSKLQSRQDQASE), 2067–2143 (SVQS…QTQN), 2267–2294 (NATSSPQGASTISSAPVQQPSTSSVTTG), 2307–2343 (SFAPSARDPNRSQPPLFARSQSNSVANSTSTNIQQQQ), 2372–2391 (QHQSQSSQQPSDLMSSKFSM), 2429–2448 (QESSTGAPGPTSSQLANSYY), and 2496–2620 (QKKQ…SSNW). Residues 1917–1946 (APSSIPKSLSSASIARQSASPIPQQSSQRS) show a composition bias toward low complexity. Polar residues predominate over residues 1982–1993 (ISQSPKQAPQIP). Low complexity-rich tracts occupy residues 1994 to 2006 (STQQQSKLQSRQD), 2067 to 2078 (SVQSVQHMQQQQ), and 2100 to 2118 (SQPISRPQSSVQVSQSSFS). Composition is skewed to polar residues over residues 2267-2286 (NATSSPQGASTISSAPVQQP) and 2325-2339 (RSQSNSVANSTSTNI). The span at 2505–2528 (SFMHNSQQPQPFGAPSNASANQSR) shows a compositional bias: polar residues. Positions 2535–2547 (RPQPPPFVAPQAP) are enriched in pro residues. A compositionally biased stretch (polar residues) spans 2552-2565 (SLGNASSTTNPSRT). Low complexity-rich tracts occupy residues 2566–2588 (SMQQMYQQYGQSSQQQPYGQMPQ) and 2597–2620 (QQQQSASGQQNHQSSSSNKWSSNW).

This sequence belongs to the mask family.

The protein resides in the cytoplasm. This Caenorhabditis elegans protein is Ankyrin repeat and KH domain-containing protein mask-1.